Consider the following 625-residue polypeptide: tRNA uridine 5-carboxymethylaminomethyl modification enzyme MnmG (625 aa).

Residues 11-16, Val-123, and Ser-178 each bind FAD; that span reads GAGHAG. 271 to 285 lines the NAD(+) pocket; the sequence is GPRYCPSIETKIVTF. Gln-368 is a binding site for FAD.

Belongs to the MnmG family. In terms of assembly, homodimer. Heterotetramer of two MnmE and two MnmG subunits. It depends on FAD as a cofactor.

The protein resides in the cytoplasm. Its function is as follows. NAD-binding protein involved in the addition of a carboxymethylaminomethyl (cmnm) group at the wobble position (U34) of certain tRNAs, forming tRNA-cmnm(5)s(2)U34. The polypeptide is tRNA uridine 5-carboxymethylaminomethyl modification enzyme MnmG (Bacteroides fragilis (strain YCH46)).